The sequence spans 304 residues: L-lactate dehydrogenase (304 aa).

Residues V11, D32, R37, and 76–77 (GA) each bind NAD(+). Residues Q79, R85, and 117-120 (NPVD) contribute to the substrate site. S138 contributes to the NAD(+) binding site. 143–146 (DSAR) contributes to the substrate binding site. 2 residues coordinate beta-D-fructose 1,6-bisphosphate: R148 and H163. Residue H170 is the Proton acceptor of the active site. T225 is a substrate binding site.

This sequence belongs to the LDH/MDH superfamily. LDH family. In terms of assembly, homotetramer.

It localises to the cytoplasm. It carries out the reaction (S)-lactate + NAD(+) = pyruvate + NADH + H(+). Its pathway is fermentation; pyruvate fermentation to lactate; (S)-lactate from pyruvate: step 1/1. With respect to regulation, allosterically activated by fructose 1,6-bisphosphate (FBP). Functionally, catalyzes the conversion of lactate to pyruvate. The polypeptide is L-lactate dehydrogenase (Deinococcus radiodurans (strain ATCC 13939 / DSM 20539 / JCM 16871 / CCUG 27074 / LMG 4051 / NBRC 15346 / NCIMB 9279 / VKM B-1422 / R1)).